Consider the following 148-residue polypeptide: UPF0735 ACT domain-containing protein Dred_1164 (148 aa).

Positions 72 to 147 (TLALLMEHQP…GVREVRLVGQ (76 aa)) constitute an ACT domain.

The protein belongs to the UPF0735 family.

This Desulforamulus reducens (strain ATCC BAA-1160 / DSM 100696 / MI-1) (Desulfotomaculum reducens) protein is UPF0735 ACT domain-containing protein Dred_1164.